Consider the following 260-residue polypeptide: NH(3)-dependent NAD(+) synthetase (260 aa).

Residue 31–38 coordinates ATP; it reads GLSGGLDS. D37 contacts Mg(2+). R112 is a binding site for deamido-NAD(+). T132 contacts ATP. E137 lines the Mg(2+) pocket. 2 residues coordinate ATP: K161 and S183.

Belongs to the NAD synthetase family. Homodimer.

It catalyses the reaction deamido-NAD(+) + NH4(+) + ATP = AMP + diphosphate + NAD(+) + H(+). It participates in cofactor biosynthesis; NAD(+) biosynthesis; NAD(+) from deamido-NAD(+) (ammonia route): step 1/1. Its function is as follows. Catalyzes the ATP-dependent amidation of deamido-NAD to form NAD. Uses ammonia as a nitrogen source. The polypeptide is NH(3)-dependent NAD(+) synthetase (Helicobacter pylori (strain G27)).